The primary structure comprises 337 residues: Phosphate acyltransferase (337 aa).

This sequence belongs to the PlsX family. In terms of assembly, homodimer. Probably interacts with PlsY.

The protein localises to the cytoplasm. The catalysed reaction is a fatty acyl-[ACP] + phosphate = an acyl phosphate + holo-[ACP]. Its pathway is lipid metabolism; phospholipid metabolism. Catalyzes the reversible formation of acyl-phosphate (acyl-PO(4)) from acyl-[acyl-carrier-protein] (acyl-ACP). This enzyme utilizes acyl-ACP as fatty acyl donor, but not acyl-CoA. The polypeptide is Phosphate acyltransferase (Latilactobacillus sakei subsp. sakei (strain 23K) (Lactobacillus sakei subsp. sakei)).